The primary structure comprises 98 residues: ESAT-6-like protein EsxW (98 aa).

The protein belongs to the WXG100 family. CFP-10 subfamily. As to quaternary structure, forms a tight 1:1 complex with EsxV. The complex is destabilized at low pH. Unfolding of the proteins is required for dissociation of the complex and membrane binding.

The protein localises to the secreted. The polypeptide is ESAT-6-like protein EsxW (Mycobacterium tuberculosis (strain ATCC 25618 / H37Rv)).